The primary structure comprises 141 residues: Hemoglobin subunit alpha (141 aa).

Residues 1–141 (VLSPADKANI…VSTVLTSKYR (141 aa)) form the Globin domain. Position 3 is a phosphoserine (S3). N6-succinyllysine is present on residues K7 and K11. K16 bears the N6-acetyllysine; alternate mark. K16 is modified (N6-succinyllysine; alternate). Y24 is modified (phosphotyrosine). S35 is subject to Phosphoserine. K40 carries the N6-succinyllysine modification. The residue at position 49 (S49) is a Phosphoserine. H58 lines the O2 pocket. Residue H87 coordinates heme b. Phosphoserine is present on S102. T108 is subject to Phosphothreonine. Phosphoserine occurs at positions 124 and 131. Residues T134 and T137 each carry the phosphothreonine modification. S138 is subject to Phosphoserine.

This sequence belongs to the globin family. Heterotetramer of two alpha chains and two beta chains. As to expression, red blood cells.

Functionally, involved in oxygen transport from the lung to the various peripheral tissues. Its function is as follows. Hemopressin acts as an antagonist peptide of the cannabinoid receptor CNR1. Hemopressin-binding efficiently blocks cannabinoid receptor CNR1 and subsequent signaling. The chain is Hemoglobin subunit alpha (HBA) from Meles meles (Eurasian badger).